The sequence spans 418 residues: Queuine tRNA-ribosyltransferase accessory subunit 2 (418 aa).

Residues Cys-325, Cys-327, Cys-330, and His-356 each contribute to the Zn(2+) site.

Belongs to the queuine tRNA-ribosyltransferase family. QTRT2 subfamily. Heterodimer of a catalytic subunit and an accessory subunit. Requires Zn(2+) as cofactor.

It is found in the cytoplasm. Functionally, non-catalytic subunit of the queuine tRNA-ribosyltransferase (TGT) that catalyzes the base-exchange of a guanine (G) residue with queuine (Q) at position 34 (anticodon wobble position) in tRNAs with GU(N) anticodons (tRNA-Asp, -Asn, -His and -Tyr), resulting in the hypermodified nucleoside queuosine (7-(((4,5-cis-dihydroxy-2-cyclopenten-1-yl)amino)methyl)-7-deazaguanosine). The polypeptide is Queuine tRNA-ribosyltransferase accessory subunit 2 (Drosophila erecta (Fruit fly)).